The chain runs to 137 residues: Large ribosomal subunit protein mL61 (137 aa).

The protein belongs to the mitochondrion-specific ribosomal protein mL61 family. As to quaternary structure, component of the mitochondrial large ribosomal subunit (mt-LSU). Mature yeast 74S mitochondrial ribosomes consist of a small (37S) and a large (54S) subunit. The 37S small subunit contains a 15S ribosomal RNA (15S mt-rRNA) and 34 different proteins. The 54S large subunit contains a 21S rRNA (21S mt-rRNA) and 46 different proteins.

Its subcellular location is the mitochondrion. Component of the mitochondrial ribosome (mitoribosome), a dedicated translation machinery responsible for the synthesis of mitochondrial genome-encoded proteins, including at least some of the essential transmembrane subunits of the mitochondrial respiratory chain. The mitoribosomes are attached to the mitochondrial inner membrane and translation products are cotranslationally integrated into the membrane. mL61 is not essential in cells grown at 30 degrees Celsius but is required for mitochondrial translation in cells grown at 18 degrees Celsius. This chain is Large ribosomal subunit protein mL61 (MRP49), found in Saccharomyces cerevisiae (strain ATCC 204508 / S288c) (Baker's yeast).